We begin with the raw amino-acid sequence, 333 residues long: Ornithine carbamoyltransferase (333 aa).

Residues 56-59 (STRT), Q83, R107, and 134-137 (HPTQ) contribute to the carbamoyl phosphate site. L-ornithine contacts are provided by residues N167, D231, and 235–236 (SM). Residues 273-274 (CL) and R318 each bind carbamoyl phosphate.

The protein belongs to the aspartate/ornithine carbamoyltransferase superfamily. OTCase family.

Its subcellular location is the cytoplasm. It carries out the reaction carbamoyl phosphate + L-ornithine = L-citrulline + phosphate + H(+). It participates in amino-acid biosynthesis; L-arginine biosynthesis; L-arginine from L-ornithine and carbamoyl phosphate: step 1/3. Reversibly catalyzes the transfer of the carbamoyl group from carbamoyl phosphate (CP) to the N(epsilon) atom of ornithine (ORN) to produce L-citrulline. The protein is Ornithine carbamoyltransferase (argF) of Staphylococcus aureus (strain COL).